A 313-amino-acid polypeptide reads, in one-letter code: tRNA dimethylallyltransferase (313 aa).

20–27 is an ATP binding site; it reads GPTGTGKS. Residue 22–27 participates in substrate binding; the sequence is TGTGKS.

The protein belongs to the IPP transferase family. As to quaternary structure, monomer. Requires Mg(2+) as cofactor.

The enzyme catalyses adenosine(37) in tRNA + dimethylallyl diphosphate = N(6)-dimethylallyladenosine(37) in tRNA + diphosphate. In terms of biological role, catalyzes the transfer of a dimethylallyl group onto the adenine at position 37 in tRNAs that read codons beginning with uridine, leading to the formation of N6-(dimethylallyl)adenosine (i(6)A). The polypeptide is tRNA dimethylallyltransferase (Kocuria rhizophila (strain ATCC 9341 / DSM 348 / NBRC 103217 / DC2201)).